We begin with the raw amino-acid sequence, 216 residues long: MNYPHPIIAREGWPFIAIAAVVALLIHAVGGFGLAWPFWLLLVFVVQFFRDPPRAVPTQANAVLCPADGRIVAVETAHDPYADREALKISVFMNVFNVHSQRSPVDGAVQKVEYFPGAFLNAALDKASAENERNAVVIQTGAGHTVTAVQIAGLVARRILCYVRAGEPLSRGQRYGFIRFGSRVDVYLPKGSRARVSIGEKVSASSTILAELPEQP.

S182 functions as the Schiff-base intermediate with substrate; via pyruvic acid in the catalytic mechanism. Residue S182 is modified to Pyruvic acid (Ser); by autocatalysis.

This sequence belongs to the phosphatidylserine decarboxylase family. PSD-A subfamily. Heterodimer of a large membrane-associated beta subunit and a small pyruvoyl-containing alpha subunit. It depends on pyruvate as a cofactor. In terms of processing, is synthesized initially as an inactive proenzyme. Formation of the active enzyme involves a self-maturation process in which the active site pyruvoyl group is generated from an internal serine residue via an autocatalytic post-translational modification. Two non-identical subunits are generated from the proenzyme in this reaction, and the pyruvate is formed at the N-terminus of the alpha chain, which is derived from the carboxyl end of the proenzyme. The post-translation cleavage follows an unusual pathway, termed non-hydrolytic serinolysis, in which the side chain hydroxyl group of the serine supplies its oxygen atom to form the C-terminus of the beta chain, while the remainder of the serine residue undergoes an oxidative deamination to produce ammonia and the pyruvoyl prosthetic group on the alpha chain.

Its subcellular location is the cell membrane. It carries out the reaction a 1,2-diacyl-sn-glycero-3-phospho-L-serine + H(+) = a 1,2-diacyl-sn-glycero-3-phosphoethanolamine + CO2. It participates in phospholipid metabolism; phosphatidylethanolamine biosynthesis; phosphatidylethanolamine from CDP-diacylglycerol: step 2/2. Catalyzes the formation of phosphatidylethanolamine (PtdEtn) from phosphatidylserine (PtdSer). This Burkholderia mallei (strain NCTC 10247) protein is Phosphatidylserine decarboxylase proenzyme.